We begin with the raw amino-acid sequence, 510 residues long: 11S globulin (510 aa).

The signal sequence occupies residues M1–Q23. 2 cysteine pairs are disulfide-bonded: C35–C68 and C111–C325. The Cupin type-1 1 domain occupies K38 to R257. 2 disordered regions span residues A194–G239 and W284–G319. Positions W284 to N318 are enriched in basic and acidic residues. The NGXEET; peptidase recognition motif motif lies at N318 to T323. The Cupin type-1 2 domain maps to E331–R480. Residues Q487–V510 are disordered.

It belongs to the 11S seed storage protein (globulins) family. Homohexamer. Can assemble in other multimeric configurations. Proteolytically processed from a single precursor to produce an acidic and a basic chain that are linked by a disulfide bond. As to expression, expressed in endosperm of the seed.

Its function is as follows. Seed storage protein. This is 11S globulin from Juglans nigra (Black walnut).